The following is a 134-amino-acid chain: Small ribosomal subunit protein uS8c (134 aa).

The protein belongs to the universal ribosomal protein uS8 family. In terms of assembly, part of the 30S ribosomal subunit.

The protein localises to the plastid. Its subcellular location is the chloroplast. Functionally, one of the primary rRNA binding proteins, it binds directly to 16S rRNA central domain where it helps coordinate assembly of the platform of the 30S subunit. The sequence is that of Small ribosomal subunit protein uS8c (rps8) from Capsella bursa-pastoris (Shepherd's purse).